The primary structure comprises 94 residues: Co-chaperonin GroES (94 aa).

This sequence belongs to the GroES chaperonin family. As to quaternary structure, heptamer of 7 subunits arranged in a ring. Interacts with the chaperonin GroEL.

The protein resides in the cytoplasm. Together with the chaperonin GroEL, plays an essential role in assisting protein folding. The GroEL-GroES system forms a nano-cage that allows encapsulation of the non-native substrate proteins and provides a physical environment optimized to promote and accelerate protein folding. GroES binds to the apical surface of the GroEL ring, thereby capping the opening of the GroEL channel. The protein is Co-chaperonin GroES of Lactobacillus gasseri (strain ATCC 33323 / DSM 20243 / BCRC 14619 / CIP 102991 / JCM 1131 / KCTC 3163 / NCIMB 11718 / NCTC 13722 / AM63).